Reading from the N-terminus, the 351-residue chain is MSGIVTYGSYIPRYRIKPDEIARVWGENPDHIKNGIYILSKSVPAPDEDVATISVEAARNALKRKKIDPKEIGAIYVGSESHPYAVKPTATIVGSAIGVDFSLFAADYEFACKAGTAGMQNVKAMVDSGMIKYGLAIGADTSQGAPGDALEYSASAGGTAFIIGKDDTIAEINSTLSVASDTPDFWRREGQPYPSHGERFTGEPAYFRHVITAAKMMMERMETQPKDYDYVVFHQPNGKFPTRAAKMLGFEEKQYKDGLLTPYIGNTYSGSMMTGLSSILDVSKPGDHILAVSFGSGAGSDAFDITVTDRIEEMDRNRAPTIKKMLENVKWVDYAIYAKYKKKIIVGDGIE.

Glutamate 80 acts as the Proton donor/acceptor in catalysis. Cysteine 112 serves as the catalytic Acyl-thioester intermediate. (3S)-3-hydroxy-3-methylglutaryl-CoA contacts are provided by cysteine 112 and serine 153. Arginine 199 serves as a coordination point for CoA. The (3S)-3-hydroxy-3-methylglutaryl-CoA site is built by threonine 201 and histidine 234. Histidine 234 acts as the Proton donor/acceptor in catalysis. Lysine 239 contacts CoA. Residues arginine 243, asparagine 266, and serine 296 each coordinate (3S)-3-hydroxy-3-methylglutaryl-CoA.

This sequence belongs to the thiolase-like superfamily. Archaeal HMG-CoA synthase family. As to quaternary structure, interacts with acetoacetyl-CoA thiolase that catalyzes the precedent step in the pathway and with a DUF35 protein. The acetoacetyl-CoA thiolase/HMG-CoA synthase complex channels the intermediate via a fused CoA-binding site, which allows for efficient coupling of the endergonic thiolase reaction with the exergonic HMGCS reaction.

The catalysed reaction is acetoacetyl-CoA + acetyl-CoA + H2O = (3S)-3-hydroxy-3-methylglutaryl-CoA + CoA + H(+). Its pathway is metabolic intermediate biosynthesis; (R)-mevalonate biosynthesis; (R)-mevalonate from acetyl-CoA: step 2/3. Its function is as follows. Catalyzes the condensation of acetyl-CoA with acetoacetyl-CoA to form 3-hydroxy-3-methylglutaryl-CoA (HMG-CoA). Functions in the mevalonate (MVA) pathway leading to isopentenyl diphosphate (IPP), a key precursor for the biosynthesis of isoprenoid compounds that are building blocks of archaeal membrane lipids. The polypeptide is Hydroxymethylglutaryl-CoA synthase (Thermoplasma acidophilum (strain ATCC 25905 / DSM 1728 / JCM 9062 / NBRC 15155 / AMRC-C165)).